A 674-amino-acid chain; its full sequence is tRNA 5-methylaminomethyl-2-thiouridine biosynthesis bifunctional protein MnmC (674 aa).

The tract at residues 1–248 (MAASSLPSHN…KREMCFGRYA (248 aa)) is tRNA (mnm(5)s(2)U34)-methyltransferase. The segment at 276–674 (IGAGLAGATV…AIRHWRSGKR (399 aa)) is FAD-dependent cmnm(5)s(2)U34 oxidoreductase.

It in the N-terminal section; belongs to the methyltransferase superfamily. tRNA (mnm(5)s(2)U34)-methyltransferase family. The protein in the C-terminal section; belongs to the DAO family. The cofactor is FAD.

Its subcellular location is the cytoplasm. The enzyme catalyses 5-aminomethyl-2-thiouridine(34) in tRNA + S-adenosyl-L-methionine = 5-methylaminomethyl-2-thiouridine(34) in tRNA + S-adenosyl-L-homocysteine + H(+). Its function is as follows. Catalyzes the last two steps in the biosynthesis of 5-methylaminomethyl-2-thiouridine (mnm(5)s(2)U) at the wobble position (U34) in tRNA. Catalyzes the FAD-dependent demodification of cmnm(5)s(2)U34 to nm(5)s(2)U34, followed by the transfer of a methyl group from S-adenosyl-L-methionine to nm(5)s(2)U34, to form mnm(5)s(2)U34. This Hydrogenovibrio crunogenus (strain DSM 25203 / XCL-2) (Thiomicrospira crunogena) protein is tRNA 5-methylaminomethyl-2-thiouridine biosynthesis bifunctional protein MnmC.